The primary structure comprises 468 residues: MSVVTRFAPSPTGYLHVGGARTALYSWLVAKAQGGEFVLRIEDTDRERSTQPAIDAILEGMEWLGLSWDRGPYYQTQRFERYQELIDKLLEEDKAYKCYCSTERLEKMREEQMAAGEKPRYDGHCRDNPNVGGDKYVIRFRNPQDGSVVFDDHIRGRIEFANTELDDLIIARTDGTPTYNFCVVVDDWDMDITHVVRGEDHINNTPRQINILKALGAPVPQYAHVSMILGDDGKKLSKRHGAVSVMQYRDDGYVPEAVVNYLARLGWSHGDQEIFSRDELVEYFKLDDVNKAASAFNTEKLNWLNQHYMKTLPAEQVAPQLQWQFDQIGVDTSNGPALEQVVSLQADRVKTLKEMAAISRYFFESFDEFDEKAAKKHLRPVAKEPLVKAKELLGAISDWNAANIQAAINQTAADLDVGMGKVGMPLRVAATGGGNSPSLDVTLELIPQQTVLARIDLALEFIANRENA.

A 'HIGH' region motif is present at residues 9–19 (PSPTGYLHVGG). Residues cysteine 98, cysteine 100, cysteine 125, and aspartate 127 each contribute to the Zn(2+) site. Positions 235–239 (KLSKR) match the 'KMSKS' region motif. Lysine 238 lines the ATP pocket.

The protein belongs to the class-I aminoacyl-tRNA synthetase family. Glutamate--tRNA ligase type 1 subfamily. Monomer. Zn(2+) serves as cofactor.

Its subcellular location is the cytoplasm. It carries out the reaction tRNA(Glu) + L-glutamate + ATP = L-glutamyl-tRNA(Glu) + AMP + diphosphate. Its function is as follows. Catalyzes the attachment of glutamate to tRNA(Glu) in a two-step reaction: glutamate is first activated by ATP to form Glu-AMP and then transferred to the acceptor end of tRNA(Glu). The sequence is that of Glutamate--tRNA ligase from Idiomarina loihiensis (strain ATCC BAA-735 / DSM 15497 / L2-TR).